The following is a 124-amino-acid chain: uncharacterized protein (124 aa).

It is found in the cytoplasm. It localises to the nucleus. This is an uncharacterized protein from Schizosaccharomyces pombe (strain 972 / ATCC 24843) (Fission yeast).